Consider the following 593-residue polypeptide: ESX-1 secretion system protein EccCb1 (593 aa).

2 FtsK domains span residues 66–260 (RQEV…NETQ) and 350–546 (QVPL…EKND). ATP-binding positions include 85–92 (GAPQTGKS) and 377–384 (GAPKSGKT).

Part of the ESX-1 / type VII secretion system (T7SS), which is composed of cytosolic and membrane components. The ESX-1 membrane complex is composed of EccB1, EccCa1, EccCb1, EccD1 and EccE1.

It localises to the cytoplasm. Functionally, part of the ESX-1 / type VII specialized secretion system (T7SS), which exports several proteins including EsxA and EsxB. Plays a role in DNA conjugation, in both donor and recipient strains. In Mycolicibacterium smegmatis (strain MKD8) (Mycobacterium smegmatis), this protein is ESX-1 secretion system protein EccCb1 (eccCb1).